Consider the following 132-residue polypeptide: Intraflagellar transport protein 20 homolog A (132 aa).

The stretch at glutamate 87–aspartate 112 forms a coiled coil.

It is found in the golgi apparatus. Its subcellular location is the cis-Golgi network. The protein localises to the cytoplasm. It localises to the cytoskeleton. The protein resides in the microtubule organizing center. It is found in the centrosome. Its subcellular location is the centriole. The protein localises to the cell projection. It localises to the cilium. In terms of biological role, involved in ciliary process assembly. May play a role in the trafficking of ciliary membrane proteins from the Golgi complex to the cilium. Regulates the platelet-derived growth factor receptor-alpha (PDGFRA) signaling pathway. Plays an important role in spermatogenesis, particularly spermiogenesis, when germ cells form flagella. The chain is Intraflagellar transport protein 20 homolog A (ift20-a) from Xenopus laevis (African clawed frog).